We begin with the raw amino-acid sequence, 324 residues long: Glyoxylate/hydroxypyruvate reductase B (324 aa).

Catalysis depends on residues Arg-237 and Glu-266. The Proton donor role is filled by His-285.

This sequence belongs to the D-isomer specific 2-hydroxyacid dehydrogenase family. GhrB subfamily. In terms of assembly, homodimer.

It localises to the cytoplasm. It carries out the reaction glycolate + NADP(+) = glyoxylate + NADPH + H(+). The enzyme catalyses (R)-glycerate + NAD(+) = 3-hydroxypyruvate + NADH + H(+). The catalysed reaction is (R)-glycerate + NADP(+) = 3-hydroxypyruvate + NADPH + H(+). Its function is as follows. Catalyzes the NADPH-dependent reduction of glyoxylate and hydroxypyruvate into glycolate and glycerate, respectively. The sequence is that of Glyoxylate/hydroxypyruvate reductase B from Shigella dysenteriae serotype 1 (strain Sd197).